A 330-amino-acid chain; its full sequence is Mucin-15 (330 aa).

The signal sequence occupies residues 1-23; that stretch reads MLTSAKILLISILSSLLLFGSHG. The interval 23-115 is disordered; that stretch reads GEEGQKTNTT…SPRSPSTHSF (93 aa). Topologically, residues 24 to 232 are extracellular; it reads EEGQKTNTTE…SDPQEENRNT (209 aa). N-linked (GlcNAc...) asparagine glycosylation is found at asparagine 30, asparagine 44, asparagine 54, asparagine 71, asparagine 79, asparagine 89, asparagine 94, asparagine 122, asparagine 138, asparagine 147, asparagine 154, asparagine 162, asparagine 175, asparagine 214, and asparagine 221. The span at 42-56 shows a compositional bias: polar residues; it reads MENQSVPLESKANLT. The span at 86-115 shows a compositional bias: polar residues; that stretch reads FYSNLSTDNSSRSPSLMPTLSPRSPSTHSF. Positions 164 to 185 are disordered; sequence SITVSNLPSGPNTTSVTPMVTE. The helical transmembrane segment at 233 to 253 threads the bilayer; the sequence is GVVFGAILGAILGASLLSLVG. Residues 254–330 lie on the Cytoplasmic side of the membrane; the sequence is YLLCGKRKTD…DDIPPLRTSV (77 aa). The disordered stretch occupies residues 279 to 330; that stretch reads LRLDNAPEPYDMSFGNSSYYNPTANDSSTSAGGENAHDSIPMDDIPPLRTSV. A compositionally biased stretch (polar residues) spans 292-310; that stretch reads FGNSSYYNPTANDSSTSAG.

Highly glycosylated (N- and O-linked carbohydrates). As to expression, mainly expressed on apical surfaces of the mammary epithelial cells.

Its subcellular location is the cell membrane. The protein localises to the secreted. This chain is Mucin-15 (MUC15), found in Bos taurus (Bovine).